The primary structure comprises 211 residues: Large ribosomal subunit protein uL3 (211 aa).

N5-methylglutamine is present on Gln-150.

It belongs to the universal ribosomal protein uL3 family. As to quaternary structure, part of the 50S ribosomal subunit. Forms a cluster with proteins L14 and L19. In terms of processing, methylated by PrmB.

One of the primary rRNA binding proteins, it binds directly near the 3'-end of the 23S rRNA, where it nucleates assembly of the 50S subunit. This is Large ribosomal subunit protein uL3 from Pseudomonas syringae pv. syringae (strain B728a).